Here is a 113-residue protein sequence, read N- to C-terminus: Large ribosomal subunit protein uL22 (113 aa).

The protein belongs to the universal ribosomal protein uL22 family. Part of the 50S ribosomal subunit.

This protein binds specifically to 23S rRNA; its binding is stimulated by other ribosomal proteins, e.g. L4, L17, and L20. It is important during the early stages of 50S assembly. It makes multiple contacts with different domains of the 23S rRNA in the assembled 50S subunit and ribosome. Its function is as follows. The globular domain of the protein is located near the polypeptide exit tunnel on the outside of the subunit, while an extended beta-hairpin is found that lines the wall of the exit tunnel in the center of the 70S ribosome. This chain is Large ribosomal subunit protein uL22, found in Bacillus subtilis (strain 168).